The following is a 441-amino-acid chain: Ribosomal protein uS12 methylthiotransferase RimO (441 aa).

Positions 8 to 118 constitute an MTTase N-terminal domain; the sequence is PKIGFVSLGC…VLEHVHHYVP (111 aa). 6 residues coordinate [4Fe-4S] cluster: C17, C53, C82, C150, C154, and C157. The region spanning 136-373 is the Radical SAM core domain; it reads LTPRHYAYLK…MQLQQQISAE (238 aa). The 66-residue stretch at 376–441 folds into the TRAM domain; that stretch reads QEKVGREILV…DEYDLWGSRV (66 aa).

This sequence belongs to the methylthiotransferase family. RimO subfamily. Requires [4Fe-4S] cluster as cofactor.

It localises to the cytoplasm. The catalysed reaction is L-aspartate(89)-[ribosomal protein uS12]-hydrogen + (sulfur carrier)-SH + AH2 + 2 S-adenosyl-L-methionine = 3-methylsulfanyl-L-aspartate(89)-[ribosomal protein uS12]-hydrogen + (sulfur carrier)-H + 5'-deoxyadenosine + L-methionine + A + S-adenosyl-L-homocysteine + 2 H(+). Functionally, catalyzes the methylthiolation of an aspartic acid residue of ribosomal protein uS12. This chain is Ribosomal protein uS12 methylthiotransferase RimO, found in Escherichia coli (strain UTI89 / UPEC).